Reading from the N-terminus, the 917-residue chain is Protein translocase subunit SecA (917 aa).

ATP is bound by residues Gln87, 105-109 (GEGKT), and Asp513. The tract at residues 834-917 (EEQMNEMEKR…YKSCHGKLTG (84 aa)) is disordered. Positions 839–852 (EMEKRRQEEAERQR) are enriched in basic and acidic residues. Residues 862-876 (APSQLAAPATPATPE) are compositionally biased toward low complexity. Positions 900, 902, 911, and 912 each coordinate Zn(2+).

This sequence belongs to the SecA family. Monomer and homodimer. Part of the essential Sec protein translocation apparatus which comprises SecA, SecYEG and auxiliary proteins SecDF-YajC and YidC. It depends on Zn(2+) as a cofactor.

It is found in the cell inner membrane. It localises to the cytoplasm. It carries out the reaction ATP + H2O + cellular proteinSide 1 = ADP + phosphate + cellular proteinSide 2.. In terms of biological role, part of the Sec protein translocase complex. Interacts with the SecYEG preprotein conducting channel. Has a central role in coupling the hydrolysis of ATP to the transfer of proteins into and across the cell membrane, serving both as a receptor for the preprotein-SecB complex and as an ATP-driven molecular motor driving the stepwise translocation of polypeptide chains across the membrane. The polypeptide is Protein translocase subunit SecA (Saccharophagus degradans (strain 2-40 / ATCC 43961 / DSM 17024)).